The chain runs to 507 residues: Probable D-lactate dehydrogenase, mitochondrial (507 aa).

A mitochondrion-targeting transit peptide spans 1 to 52; the sequence is MARLLRSATWELFPWRGYCSQKAKGELCRDFVEALKAVVGGSHVSTAAVVRE. K36 carries the N6-acetyllysine modification. An FAD-binding PCMH-type domain is found at 62–265; that stretch reads RCEPPDAVVW…TATTLRLHPA (204 aa). N6-acetyllysine is present on K315. K358 carries the N6-acetyllysine; alternate modification. N6-succinyllysine; alternate is present on K358. N6-acetyllysine occurs at positions 445 and 472.

The protein belongs to the FAD-binding oxidoreductase/transferase type 4 family. As to quaternary structure, interacts with CSRP3. The cofactor is FAD. As to expression, expressed moderately in heart and liver and at lower levels in skeletal muscle and kidney.

Its subcellular location is the mitochondrion. The catalysed reaction is (R)-lactate + 2 Fe(III)-[cytochrome c] = 2 Fe(II)-[cytochrome c] + pyruvate + 2 H(+). Its function is as follows. Involved in D-lactate, but not L-lactate catabolic process. The polypeptide is Probable D-lactate dehydrogenase, mitochondrial (Homo sapiens (Human)).